A 238-amino-acid chain; its full sequence is 3-dehydroquinate dehydratase (238 aa).

3-dehydroquinate is bound by residues 35–37 (ELR) and R70. The active-site Proton donor/acceptor is the H133. Residue K160 is the Schiff-base intermediate with substrate of the active site. R202 and Q225 together coordinate 3-dehydroquinate.

This sequence belongs to the type-I 3-dehydroquinase family. Homodimer.

It catalyses the reaction 3-dehydroquinate = 3-dehydroshikimate + H2O. The protein operates within metabolic intermediate biosynthesis; chorismate biosynthesis; chorismate from D-erythrose 4-phosphate and phosphoenolpyruvate: step 3/7. Involved in the third step of the chorismate pathway, which leads to the biosynthesis of aromatic amino acids. Catalyzes the cis-dehydration of 3-dehydroquinate (DHQ) and introduces the first double bond of the aromatic ring to yield 3-dehydroshikimate. The polypeptide is 3-dehydroquinate dehydratase (Staphylococcus aureus (strain USA300)).